The chain runs to 228 residues: Ribonuclease 3 (228 aa).

Positions 7–136 constitute an RNase III domain; the sequence is LNKLKNEYNI…FNGALFLDQG (130 aa). Position 49 (Glu49) interacts with Mg(2+). Residue Asp53 is part of the active site. Residues Asp122 and Glu125 each coordinate Mg(2+). Residue Glu125 is part of the active site. Positions 162–228 constitute a DRBM domain; that stretch reads DYKTDLQELL…AAKAALQKFE (67 aa). A disordered region spans residues 207-228; sequence GEGHNKKAAEQQAAKAALQKFE. The span at 216–228 shows a compositional bias: low complexity; that stretch reads EQQAAKAALQKFE.

Belongs to the ribonuclease III family. In terms of assembly, homodimer. Mg(2+) is required as a cofactor.

It is found in the cytoplasm. It catalyses the reaction Endonucleolytic cleavage to 5'-phosphomonoester.. In terms of biological role, digests double-stranded RNA. Involved in the processing of primary rRNA transcript to yield the immediate precursors to the large and small rRNAs (23S and 16S). Processes some mRNAs, and tRNAs when they are encoded in the rRNA operon. Processes pre-crRNA and tracrRNA of type II CRISPR loci if present in the organism. The sequence is that of Ribonuclease 3 from Lactobacillus acidophilus (strain ATCC 700396 / NCK56 / N2 / NCFM).